Here is a 347-residue protein sequence, read N- to C-terminus: 4-hydroxy-2-oxovalerate aldolase 1 (347 aa).

The Pyruvate carboxyltransferase domain maps to 8 to 261 (VTLYDMSLLX…ETGIDLYKIM (254 aa)). The active-site Proton acceptor is histidine 20. 2 residues coordinate substrate: serine 171 and histidine 200. 2 residues coordinate Mn(2+): histidine 200 and histidine 202. Tyrosine 291 is a binding site for substrate.

The protein belongs to the 4-hydroxy-2-oxovalerate aldolase family.

The catalysed reaction is (S)-4-hydroxy-2-oxopentanoate = acetaldehyde + pyruvate. The chain is 4-hydroxy-2-oxovalerate aldolase 1 (salH) from Metapseudomonas furukawaii (Pseudomonas furukawaii).